The following is a 722-amino-acid chain: Dipeptidyl aminopeptidase BII (722 aa).

The signal sequence occupies residues 1 to 24 (MRPNLLAAAIAVPLSLLAAQIAQA). Disulfide bonds link C70/C87 and C166/C174. The Charge relay system role is filled by H86. Position 215 to 216 (215 to 216 (NW)) interacts with substrate. D224 functions as the Charge relay system in the catalytic mechanism. Residues N330, 655–657 (GNS), and 673–674 (FD) each bind substrate. S657 (charge relay system) is an active-site residue.

The protein belongs to the peptidase S46 family. In terms of assembly, homodimer.

Its activity is regulated as follows. Completely inhibited by the serine protease inhibitor diisopropyl fluorophosphate (DFP) and potently inhibited by 0.5 mM ZnCl(2), 10 mM o-phenanthlorine, phenylmethanesulfonyl fluoride (PMSF) and N-tosyl-L-phenyl-alanyl chloromethyl ketone (TPCK), but not by N-tosyl-L-lysyl chloromethyl ketone (TLCK). Activity is not affected significantly by protease inhibitors, such as chymostatin, leupeptin, N-ethylmaleimide (NEM), iodoacetate (IAA), L-trans-epoxysuccinyl-leucylamido(4-guanido)butane (E64) and pepstatin A or by CoCl(2), CaCl(2) and EDTA. Its function is as follows. Exopeptidase that catalyzes the removal of dipeptide units (NH2-P2-P1-) from the free amino termini of oligopeptides and small proteins. Peptide digestion is sequential and substrate recognition is non-specific, with the exception that Pro is not suitable as a P1 residue. Removes many residues of bioactive oligopeptides such as angiotensin I and neuromedin N and also cleaves oxidized insulin B chain. Able to hydrolyze an X-Pro bond, an imido bond. No endopeptidase activity. May play a physiological role in feeding. The sequence is that of Dipeptidyl aminopeptidase BII from Pseudoxanthomonas mexicana.